We begin with the raw amino-acid sequence, 148 residues long: Large ribosomal subunit protein uL15 (148 aa).

Basic residues predominate over residues 1-30 (MPSRLRKTRKLRGHVSHGHGRIGKHRKHPG). Positions 1-38 (MPSRLRKTRKLRGHVSHGHGRIGKHRKHPGGRGNAGGL) are disordered. Position 39 is a (3S)-3-hydroxyhistidine (histidine 39). An N6-acetyllysine mark is found at lysine 47 and lysine 55. Serine 68 carries the post-translational modification Phosphoserine. Lysine 110 is modified (N6-acetyllysine).

Belongs to the universal ribosomal protein uL15 family. In terms of assembly, component of the large ribosomal subunit. Post-translationally, hydroxylated on His-39 by MINA.

Its subcellular location is the cytoplasm. Its function is as follows. Component of the large ribosomal subunit. The ribosome is a large ribonucleoprotein complex responsible for the synthesis of proteins in the cell. The polypeptide is Large ribosomal subunit protein uL15 (RPL27A) (Homo sapiens (Human)).